We begin with the raw amino-acid sequence, 287 residues long: Protease HtpX (287 aa).

A run of 2 helical transmembrane segments spans residues 4 to 24 (IFLL…VMSI) and 33 to 53 (GGLL…SLAI). His-139 lines the Zn(2+) pocket. The active site involves Glu-140. His-143 is a binding site for Zn(2+). 2 consecutive transmembrane segments (helical) span residues 154-174 (LIQG…AGII) and 195-215 (AVVF…VAYF). Residue Glu-220 participates in Zn(2+) binding.

The protein belongs to the peptidase M48B family. Zn(2+) is required as a cofactor.

Its subcellular location is the cell inner membrane. This chain is Protease HtpX, found in Shewanella sp. (strain MR-4).